The chain runs to 215 residues: Ribose-5-phosphate isomerase A (215 aa).

Substrate contacts are provided by residues 26 to 29 (TGST), 79 to 82 (DGAD), and 92 to 95 (KGGG). Catalysis depends on glutamate 101, which acts as the Proton acceptor. Position 119 (lysine 119) interacts with substrate.

This sequence belongs to the ribose 5-phosphate isomerase family. In terms of assembly, homodimer.

It carries out the reaction aldehydo-D-ribose 5-phosphate = D-ribulose 5-phosphate. The protein operates within carbohydrate degradation; pentose phosphate pathway; D-ribose 5-phosphate from D-ribulose 5-phosphate (non-oxidative stage): step 1/1. Functionally, catalyzes the reversible conversion of ribose-5-phosphate to ribulose 5-phosphate. In Xylella fastidiosa (strain 9a5c), this protein is Ribose-5-phosphate isomerase A.